Consider the following 164-residue polypeptide: ATP synthase subunit b (164 aa).

A helical transmembrane segment spans residues 6–26 (GELVGNFILVTGSVIVLLLLI).

Belongs to the ATPase B chain family. F-type ATPases have 2 components, F(1) - the catalytic core - and F(0) - the membrane proton channel. F(1) has five subunits: alpha(3), beta(3), gamma(1), delta(1), epsilon(1). F(0) has three main subunits: a(1), b(2) and c(10-14). The alpha and beta chains form an alternating ring which encloses part of the gamma chain. F(1) is attached to F(0) by a central stalk formed by the gamma and epsilon chains, while a peripheral stalk is formed by the delta and b chains.

It localises to the cell membrane. Its function is as follows. F(1)F(0) ATP synthase produces ATP from ADP in the presence of a proton or sodium gradient. F-type ATPases consist of two structural domains, F(1) containing the extramembraneous catalytic core and F(0) containing the membrane proton channel, linked together by a central stalk and a peripheral stalk. During catalysis, ATP synthesis in the catalytic domain of F(1) is coupled via a rotary mechanism of the central stalk subunits to proton translocation. Functionally, component of the F(0) channel, it forms part of the peripheral stalk, linking F(1) to F(0). The sequence is that of ATP synthase subunit b from Streptococcus pyogenes serotype M6 (strain ATCC BAA-946 / MGAS10394).